We begin with the raw amino-acid sequence, 350 residues long: Lipoyl synthase (350 aa).

The interval 1 to 39 (MSDTSSPKPVASGEKFRTAQGITAIKDGQKRRASAEPQV) is disordered. Residues C73, C78, C84, C99, C103, C106, and S314 each coordinate [4Fe-4S] cluster. The Radical SAM core domain maps to 85 to 303 (WSNGTATIML…RDIGLEKGFM (219 aa)).

Belongs to the radical SAM superfamily. Lipoyl synthase family. The cofactor is [4Fe-4S] cluster.

The protein resides in the cytoplasm. It carries out the reaction [[Fe-S] cluster scaffold protein carrying a second [4Fe-4S](2+) cluster] + N(6)-octanoyl-L-lysyl-[protein] + 2 oxidized [2Fe-2S]-[ferredoxin] + 2 S-adenosyl-L-methionine + 4 H(+) = [[Fe-S] cluster scaffold protein] + N(6)-[(R)-dihydrolipoyl]-L-lysyl-[protein] + 4 Fe(3+) + 2 hydrogen sulfide + 2 5'-deoxyadenosine + 2 L-methionine + 2 reduced [2Fe-2S]-[ferredoxin]. It participates in protein modification; protein lipoylation via endogenous pathway; protein N(6)-(lipoyl)lysine from octanoyl-[acyl-carrier-protein]: step 2/2. Its function is as follows. Catalyzes the radical-mediated insertion of two sulfur atoms into the C-6 and C-8 positions of the octanoyl moiety bound to the lipoyl domains of lipoate-dependent enzymes, thereby converting the octanoylated domains into lipoylated derivatives. The protein is Lipoyl synthase of Ectopseudomonas mendocina (strain ymp) (Pseudomonas mendocina).